Reading from the N-terminus, the 224-residue chain is Probable molybdenum cofactor guanylyltransferase (224 aa).

GTP-binding positions include 20-22 (LAG), K33, D88, and D117. Position 117 (D117) interacts with Mg(2+).

This sequence belongs to the MobA family. The cofactor is Mg(2+).

The protein resides in the cytoplasm. It carries out the reaction Mo-molybdopterin + GTP + H(+) = Mo-molybdopterin guanine dinucleotide + diphosphate. In terms of biological role, transfers a GMP moiety from GTP to Mo-molybdopterin (Mo-MPT) cofactor (Moco or molybdenum cofactor) to form Mo-molybdopterin guanine dinucleotide (Mo-MGD) cofactor. This chain is Probable molybdenum cofactor guanylyltransferase, found in Methanosarcina mazei (strain ATCC BAA-159 / DSM 3647 / Goe1 / Go1 / JCM 11833 / OCM 88) (Methanosarcina frisia).